A 140-amino-acid polypeptide reads, in one-letter code: Large ribosomal subunit protein uL11 (140 aa).

Belongs to the universal ribosomal protein uL11 family. Part of the ribosomal stalk of the 50S ribosomal subunit. Interacts with L10 and the large rRNA to form the base of the stalk. L10 forms an elongated spine to which L12 dimers bind in a sequential fashion forming a multimeric L10(L12)X complex. In terms of processing, one or more lysine residues are methylated.

Functionally, forms part of the ribosomal stalk which helps the ribosome interact with GTP-bound translation factors. This chain is Large ribosomal subunit protein uL11, found in Syntrophotalea carbinolica (strain DSM 2380 / NBRC 103641 / GraBd1) (Pelobacter carbinolicus).